The sequence spans 232 residues: Biosynthetic peptidoglycan transglycosylase (232 aa).

The chain crosses the membrane as a helical span at residues 14-34 (AAVALVLLYQLWIFAHVLWWI).

This sequence belongs to the glycosyltransferase 51 family.

Its subcellular location is the cell inner membrane. It catalyses the reaction [GlcNAc-(1-&gt;4)-Mur2Ac(oyl-L-Ala-gamma-D-Glu-L-Lys-D-Ala-D-Ala)](n)-di-trans,octa-cis-undecaprenyl diphosphate + beta-D-GlcNAc-(1-&gt;4)-Mur2Ac(oyl-L-Ala-gamma-D-Glu-L-Lys-D-Ala-D-Ala)-di-trans,octa-cis-undecaprenyl diphosphate = [GlcNAc-(1-&gt;4)-Mur2Ac(oyl-L-Ala-gamma-D-Glu-L-Lys-D-Ala-D-Ala)](n+1)-di-trans,octa-cis-undecaprenyl diphosphate + di-trans,octa-cis-undecaprenyl diphosphate + H(+). The protein operates within cell wall biogenesis; peptidoglycan biosynthesis. Its function is as follows. Peptidoglycan polymerase that catalyzes glycan chain elongation from lipid-linked precursors. In Thiobacillus denitrificans (strain ATCC 25259 / T1), this protein is Biosynthetic peptidoglycan transglycosylase.